Consider the following 214-residue polypeptide: tRNA (guanine-N(7)-)-methyltransferase (214 aa).

S-adenosyl-L-methionine-binding residues include Glu43, Glu68, Asp95, and Asp117. The active site involves Asp117. Substrate-binding positions include Lys121, Asp153, and 190–193 (TEYE).

This sequence belongs to the class I-like SAM-binding methyltransferase superfamily. TrmB family.

The catalysed reaction is guanosine(46) in tRNA + S-adenosyl-L-methionine = N(7)-methylguanosine(46) in tRNA + S-adenosyl-L-homocysteine. The protein operates within tRNA modification; N(7)-methylguanine-tRNA biosynthesis. Functionally, catalyzes the formation of N(7)-methylguanine at position 46 (m7G46) in tRNA. The chain is tRNA (guanine-N(7)-)-methyltransferase from Staphylococcus aureus (strain MSSA476).